Here is a 211-residue protein sequence, read N- to C-terminus: Uridine kinase (211 aa).

15-22 is a binding site for ATP; the sequence is GGSGSGKT.

Belongs to the uridine kinase family.

The protein localises to the cytoplasm. It catalyses the reaction uridine + ATP = UMP + ADP + H(+). It carries out the reaction cytidine + ATP = CMP + ADP + H(+). The protein operates within pyrimidine metabolism; CTP biosynthesis via salvage pathway; CTP from cytidine: step 1/3. It participates in pyrimidine metabolism; UMP biosynthesis via salvage pathway; UMP from uridine: step 1/1. The polypeptide is Uridine kinase (Latilactobacillus sakei subsp. sakei (strain 23K) (Lactobacillus sakei subsp. sakei)).